We begin with the raw amino-acid sequence, 130 residues long: Small ribosomal subunit protein uS9 (130 aa).

This sequence belongs to the universal ribosomal protein uS9 family.

This is Small ribosomal subunit protein uS9 from Blochmanniella floridana.